A 94-amino-acid polypeptide reads, in one-letter code: Pyrimidine/purine nucleoside phosphorylase (94 aa).

Belongs to the nucleoside phosphorylase PpnP family.

The catalysed reaction is a purine D-ribonucleoside + phosphate = a purine nucleobase + alpha-D-ribose 1-phosphate. It catalyses the reaction adenosine + phosphate = alpha-D-ribose 1-phosphate + adenine. The enzyme catalyses cytidine + phosphate = cytosine + alpha-D-ribose 1-phosphate. It carries out the reaction guanosine + phosphate = alpha-D-ribose 1-phosphate + guanine. The catalysed reaction is inosine + phosphate = alpha-D-ribose 1-phosphate + hypoxanthine. It catalyses the reaction thymidine + phosphate = 2-deoxy-alpha-D-ribose 1-phosphate + thymine. The enzyme catalyses uridine + phosphate = alpha-D-ribose 1-phosphate + uracil. It carries out the reaction xanthosine + phosphate = alpha-D-ribose 1-phosphate + xanthine. Catalyzes the phosphorolysis of diverse nucleosides, yielding D-ribose 1-phosphate and the respective free bases. Can use uridine, adenosine, guanosine, cytidine, thymidine, inosine and xanthosine as substrates. Also catalyzes the reverse reactions. This is Pyrimidine/purine nucleoside phosphorylase from Cronobacter sakazakii (strain ATCC BAA-894) (Enterobacter sakazakii).